The sequence spans 349 residues: Peptide chain release factor 1 (349 aa).

Residue Gln233 is modified to N5-methylglutamine.

The protein belongs to the prokaryotic/mitochondrial release factor family. Methylated by PrmC. Methylation increases the termination efficiency of RF1.

The protein localises to the cytoplasm. In terms of biological role, peptide chain release factor 1 directs the termination of translation in response to the peptide chain termination codons UAG and UAA. The polypeptide is Peptide chain release factor 1 (Pelotomaculum thermopropionicum (strain DSM 13744 / JCM 10971 / SI)).